We begin with the raw amino-acid sequence, 187 residues long: ATP-dependent protease subunit HslV (187 aa).

Residue threonine 13 is part of the active site. The Na(+) site is built by alanine 172, cysteine 175, and threonine 178.

It belongs to the peptidase T1B family. HslV subfamily. In terms of assembly, a double ring-shaped homohexamer of HslV is capped on each side by a ring-shaped HslU homohexamer. The assembly of the HslU/HslV complex is dependent on binding of ATP.

It is found in the cytoplasm. It catalyses the reaction ATP-dependent cleavage of peptide bonds with broad specificity.. Its activity is regulated as follows. Allosterically activated by HslU binding. Its function is as follows. Protease subunit of a proteasome-like degradation complex believed to be a general protein degrading machinery. The protein is ATP-dependent protease subunit HslV of Caulobacter sp. (strain K31).